Here is a 160-residue protein sequence, read N- to C-terminus: Ribosomal RNA large subunit methyltransferase H (160 aa).

A disordered region spans residues 44 to 63 (LPESRASNSATRKREEAVQI). S-adenosyl-L-methionine is bound by residues Leu-76, Gly-108, and 127–132 (LGKMTW).

Belongs to the RNA methyltransferase RlmH family. As to quaternary structure, homodimer.

It is found in the cytoplasm. It carries out the reaction pseudouridine(1915) in 23S rRNA + S-adenosyl-L-methionine = N(3)-methylpseudouridine(1915) in 23S rRNA + S-adenosyl-L-homocysteine + H(+). Functionally, specifically methylates the pseudouridine at position 1915 (m3Psi1915) in 23S rRNA. In Allorhizobium ampelinum (strain ATCC BAA-846 / DSM 112012 / S4) (Agrobacterium vitis (strain S4)), this protein is Ribosomal RNA large subunit methyltransferase H.